A 31-amino-acid polypeptide reads, in one-letter code: Delta-conotoxin-like ErVIA (31 aa).

The propeptide occupies 1–4 (LNKR). Intrachain disulfides connect C5–C21, C12–C25, and C20–C29.

This sequence belongs to the conotoxin O1 superfamily. Expressed by the venom duct.

The protein resides in the secreted. Functionally, this toxin activates voltage-gated sodium channels. It shifts the voltage-dependence of activation to more hyperpolarized potentials but has only little effect on channel inactivation. It is active on Nav1.3/SCN3A (EC(50)=3.98 nM), Nav1.4/SCN4A (EC(50)=4.99 nM), Nav1.6/SCN8A (EC(50)=1.27 nM) and Nav1.7/SCN9A (EC(50)=2.42 nM) voltage-gated sodium channels. In vivo, it induces nocifensive or pain-like behaviors in mice when injected intraplantarly. The protein is Delta-conotoxin-like ErVIA of Conus eburneus (Ivory cone).